The following is a 340-amino-acid chain: Delta-aminolevulinic acid dehydratase (340 aa).

Positions 134, 136, and 144 each coordinate Zn(2+). Lys-211 serves as the catalytic Schiff-base intermediate with substrate. Residues Arg-221 and Arg-233 each coordinate 5-aminolevulinate. Lys-264 functions as the Schiff-base intermediate with substrate in the catalytic mechanism. 5-aminolevulinate contacts are provided by Ser-291 and Tyr-330.

Belongs to the ALAD family. Homooctamer. Zn(2+) is required as a cofactor.

It carries out the reaction 2 5-aminolevulinate = porphobilinogen + 2 H2O + H(+). It participates in porphyrin-containing compound metabolism; protoporphyrin-IX biosynthesis; coproporphyrinogen-III from 5-aminolevulinate: step 1/4. In terms of biological role, catalyzes an early step in the biosynthesis of tetrapyrroles. Binds two molecules of 5-aminolevulinate per subunit, each at a distinct site, and catalyzes their condensation to form porphobilinogen. The polypeptide is Delta-aminolevulinic acid dehydratase (HEM2) (Eremothecium gossypii (strain ATCC 10895 / CBS 109.51 / FGSC 9923 / NRRL Y-1056) (Yeast)).